Here is a 121-residue protein sequence, read N- to C-terminus: N-alpha-acetyltransferase 38, NatC auxiliary subunit (121 aa).

The region spanning 40-113 is the Sm domain; the sequence is PGRRKLQKWL…IVSLSIDEPD (74 aa).

The protein belongs to the snRNP Sm proteins family. In terms of assembly, component of the N-terminal acetyltransferase C (NatC) complex, which is composed of Naa35, Sbat/Naa38 and Naa30A. Interacts with Smn and Hez; along with Hez and Vlet, may form an accessory subcomplex involved in SMN complex function.

The protein localises to the cytoplasm. Its subcellular location is the nucleus. Auxiliary component of the N-terminal acetyltransferase C (NatC) complex which catalyzes acetylation of N-terminal methionine residues. May have an accessory function in the survival motor neuron (SMN) complex. The polypeptide is N-alpha-acetyltransferase 38, NatC auxiliary subunit (Drosophila melanogaster (Fruit fly)).